Here is a 368-residue protein sequence, read N- to C-terminus: Galactoside 2-alpha-L-fucosyltransferase Sec1 (368 aa).

Residues 1–20 (MPSDSCLLSLTVLQRLRAIC) are Cytoplasmic-facing. The chain crosses the membrane as a helical; Signal-anchor for type II membrane protein span at residues 21–41 (PPLSTFYLFFVIFVVSTIFHC). Over 42–368 (HRRLGLVPAP…APKRHWGALL (327 aa)) the chain is Lumenal. Asn-195, Asn-289, and Asn-315 each carry an N-linked (GlcNAc...) asparagine glycan.

This sequence belongs to the glycosyltransferase 11 family.

The protein localises to the golgi apparatus. It is found in the golgi stack membrane. The enzyme catalyses a ganglioside GM1 + GDP-beta-L-fucose = a ganglioside Fuc-GM1 + GDP + H(+). The protein operates within protein modification; protein glycosylation. Its function is as follows. Catalyzes the transfer of alpha 1,2-linked fucose to ganglioside GM1 and galacto-N-biose. The polypeptide is Galactoside 2-alpha-L-fucosyltransferase Sec1 (Mus musculus (Mouse)).